We begin with the raw amino-acid sequence, 267 residues long: Probable 3-methyl-2-oxobutanoate hydroxymethyltransferase (267 aa).

Belongs to the PanB family.

The enzyme catalyses 3-methyl-2-oxobutanoate + (6R)-5,10-methylene-5,6,7,8-tetrahydrofolate + H2O = 2-dehydropantoate + (6S)-5,6,7,8-tetrahydrofolate. The protein operates within cofactor biosynthesis; (R)-pantothenate biosynthesis; (R)-pantoate from 3-methyl-2-oxobutanoate: step 1/2. This Schizosaccharomyces pombe (strain 972 / ATCC 24843) (Fission yeast) protein is Probable 3-methyl-2-oxobutanoate hydroxymethyltransferase.